A 171-amino-acid polypeptide reads, in one-letter code: Transcription antitermination protein NusB (171 aa).

Belongs to the NusB family.

In terms of biological role, involved in transcription antitermination. Required for transcription of ribosomal RNA (rRNA) genes. Binds specifically to the boxA antiterminator sequence of the ribosomal RNA (rrn) operons. The polypeptide is Transcription antitermination protein NusB (Brucella abortus (strain S19)).